The following is a 715-amino-acid chain: Bromodomain-containing protein DDB_G0278469 (715 aa).

Disordered regions lie at residues 18-46 and 186-425; these read EDNNNNNNNNNNKENINNDDNNINPNRNA and QQQK…ETKQ. 5 stretches are compositionally biased toward low complexity: residues 20–45, 186–204, 215–227, 234–254, and 261–281; these read NNNNNNNNNNKENINNDDNNINPNRN, QQQKQQQQQQQQQQAPTAQ, LTAATTTPTTTTT, TAPPTTVASSSTIPKTTTTKK, and SKSNLKSSQNKLSTTTTTTIT. Basic and acidic residues predominate over residues 307–316; sequence KPKEQKKDIM. A coiled-coil region spans residues 322–368; that stretch reads SKKANTHEEKEEGESEEEEEEEEEEEEEEEEEEEEEQLEDKQKQTKT. A compositionally biased stretch (acidic residues) spans 332 to 359; sequence EEGESEEEEEEEEEEEEEEEEEEEEEQL. Residues 366–389 show a composition bias toward polar residues; it reads TKTPISQNKSASSNIKPLSKTSKS. Over residues 405–414 the composition is skewed to low complexity; the sequence is KKITSTTVTR. A coiled-coil region spans residues 437–470; the sequence is KQQTQEEIEQELKLESIRKRIEQFINKFEKEIND. Residues 474–599 form the Bromo domain; it reads KDLDEGKRKI…IQFYKSLLET (126 aa). The interval 653-715 is disordered; the sequence is LVDEDEDECL…SEEEDQEATN (63 aa). Residues 662–672 show a composition bias toward polar residues; it reads LNNQNNPTTYD. Positions 684–715 are enriched in acidic residues; that stretch reads QESDEESDEESDEESDEERDQLSEEEDQEATN.

The protein is Bromodomain-containing protein DDB_G0278469 of Dictyostelium discoideum (Social amoeba).